Consider the following 97-residue polypeptide: Small ribosomal subunit protein uS19 (97 aa).

A disordered region spans residues 74–97 (FSPTRRFGGHPDKKAVKGKIEKQG). Residues 82 to 97 (GHPDKKAVKGKIEKQG) are compositionally biased toward basic and acidic residues.

Belongs to the universal ribosomal protein uS19 family.

Functionally, protein S19 forms a complex with S13 that binds strongly to the 16S ribosomal RNA. This Petrotoga mobilis (strain DSM 10674 / SJ95) protein is Small ribosomal subunit protein uS19.